Here is a 353-residue protein sequence, read N- to C-terminus: Methylthioribose-1-phosphate isomerase (353 aa).

Residues 51–53, Arg-94, and Gln-199 each bind substrate; that span reads RGA. Asp-240 acts as the Proton donor in catalysis. Residue 250 to 251 participates in substrate binding; that stretch reads NK.

Belongs to the EIF-2B alpha/beta/delta subunits family. MtnA subfamily. As to quaternary structure, homodimer.

The catalysed reaction is 5-(methylsulfanyl)-alpha-D-ribose 1-phosphate = 5-(methylsulfanyl)-D-ribulose 1-phosphate. It participates in amino-acid biosynthesis; L-methionine biosynthesis via salvage pathway; L-methionine from S-methyl-5-thio-alpha-D-ribose 1-phosphate: step 1/6. Catalyzes the interconversion of methylthioribose-1-phosphate (MTR-1-P) into methylthioribulose-1-phosphate (MTRu-1-P). This chain is Methylthioribose-1-phosphate isomerase, found in Bacillus cereus (strain ATCC 14579 / DSM 31 / CCUG 7414 / JCM 2152 / NBRC 15305 / NCIMB 9373 / NCTC 2599 / NRRL B-3711).